We begin with the raw amino-acid sequence, 320 residues long: Malate dehydrogenase (320 aa).

NAD(+)-binding positions include 10-15 and aspartate 34; that span reads GSGMIG. Substrate is bound by residues arginine 83 and arginine 89. Residues asparagine 96 and 119-121 contribute to the NAD(+) site; that span reads ITN. Substrate contacts are provided by asparagine 121 and arginine 152. Histidine 176 (proton acceptor) is an active-site residue.

Belongs to the LDH/MDH superfamily. MDH type 3 family.

The catalysed reaction is (S)-malate + NAD(+) = oxaloacetate + NADH + H(+). Functionally, catalyzes the reversible oxidation of malate to oxaloacetate. The sequence is that of Malate dehydrogenase from Rhizobium meliloti (strain 1021) (Ensifer meliloti).